A 332-amino-acid polypeptide reads, in one-letter code: Tetraacyldisaccharide 4'-kinase (332 aa).

Position 52–59 (52–59) interacts with ATP; that stretch reads TLGGAGKT.

The protein belongs to the LpxK family.

The enzyme catalyses a lipid A disaccharide + ATP = a lipid IVA + ADP + H(+). It participates in glycolipid biosynthesis; lipid IV(A) biosynthesis; lipid IV(A) from (3R)-3-hydroxytetradecanoyl-[acyl-carrier-protein] and UDP-N-acetyl-alpha-D-glucosamine: step 6/6. In terms of biological role, transfers the gamma-phosphate of ATP to the 4'-position of a tetraacyldisaccharide 1-phosphate intermediate (termed DS-1-P) to form tetraacyldisaccharide 1,4'-bis-phosphate (lipid IVA). This is Tetraacyldisaccharide 4'-kinase from Methylobacterium sp. (strain 4-46).